The chain runs to 337 residues: Ketol-acid reductoisomerase (NADP(+)) (337 aa).

The KARI N-terminal Rossmann domain maps to 2–182 (AKIFYDNDAD…GATRAGVLLT (181 aa)). Residues 25-28 (YGSQ), serine 51, serine 53, and 83-86 (DTSQ) contribute to the NADP(+) site. Histidine 108 is an active-site residue. Glycine 134 contacts NADP(+). The KARI C-terminal knotted domain occupies 183–328 (TFAEETETDL…ANLRKMMPFI (146 aa)). 4 residues coordinate Mg(2+): aspartate 191, glutamate 195, glutamate 227, and glutamate 231. Serine 252 contacts substrate.

The protein belongs to the ketol-acid reductoisomerase family. Requires Mg(2+) as cofactor.

The catalysed reaction is (2R)-2,3-dihydroxy-3-methylbutanoate + NADP(+) = (2S)-2-acetolactate + NADPH + H(+). It catalyses the reaction (2R,3R)-2,3-dihydroxy-3-methylpentanoate + NADP(+) = (S)-2-ethyl-2-hydroxy-3-oxobutanoate + NADPH + H(+). Its pathway is amino-acid biosynthesis; L-isoleucine biosynthesis; L-isoleucine from 2-oxobutanoate: step 2/4. It participates in amino-acid biosynthesis; L-valine biosynthesis; L-valine from pyruvate: step 2/4. In terms of biological role, involved in the biosynthesis of branched-chain amino acids (BCAA). Catalyzes an alkyl-migration followed by a ketol-acid reduction of (S)-2-acetolactate (S2AL) to yield (R)-2,3-dihydroxy-isovalerate. In the isomerase reaction, S2AL is rearranged via a Mg-dependent methyl migration to produce 3-hydroxy-3-methyl-2-ketobutyrate (HMKB). In the reductase reaction, this 2-ketoacid undergoes a metal-dependent reduction by NADPH to yield (R)-2,3-dihydroxy-isovalerate. The protein is Ketol-acid reductoisomerase (NADP(+)) of Sorangium cellulosum (strain So ce56) (Polyangium cellulosum (strain So ce56)).